The chain runs to 288 residues: Transformer-2 protein homolog beta (288 aa).

2 disordered regions span residues 1-114 (MSDS…RANP) and 196-225 (TKRP…YDRG). Residue Ser-2 is modified to N-acetylserine. Residues Ser-2, Ser-4, and Ser-14 each carry the phosphoserine modification. Positions 17 to 28 (ASRSGSAHGSGK) are enriched in low complexity. Ser-29 carries the phosphoserine modification. Residue Thr-33 is modified to Phosphothreonine. Over residues 59-109 (RSRRSSRRHYTRSRSRSRSHRRSRSRSYSRDYRRRHSHSHSPMSTRRRHVG) the composition is skewed to basic residues. A phosphoserine mark is found at Ser-83, Ser-85, Ser-87, Ser-95, Ser-97, and Ser-99. A Phosphothreonine modification is found at Thr-103. The RRM domain occupies 118-196 (CCLGVFGLSL…RRIRVDFSIT (79 aa)). The segment at 193–230 (FSITKRPHTPTPGIYMGRPTYGSSRRRDYYDRGYDRGY) is linker. Lys-197 is covalently cross-linked (Glycyl lysine isopeptide (Lys-Gly) (interchain with G-Cter in SUMO2)). Thr-201 and Thr-203 each carry phosphothreonine. Phosphoserine is present on residues Ser-215 and Ser-237. Arg-241 carries the asymmetric dimethylarginine; alternate modification. Position 241 is a dimethylated arginine; alternate (Arg-241). Position 241 is an omega-N-methylarginine; alternate (Arg-241). The disordered stretch occupies residues 242–288 (GGGGGGGGWRAAQDRDQIYRRRSPSPYYSRGGYRSRSRSRSYSPRRY). Positions 274-288 (YRSRSRSRSYSPRRY) are enriched in basic residues.

Belongs to the splicing factor SR family. As to quaternary structure, found in a pre-mRNA exonic splicing enhancer (ESE) complex with TRA2B/SFRS10, SNRNP70, SNRPA1 and SRRM1. Binds to A3 enhancer proteins SFRS4, SFRS5, SFRS6 and SFRS9. Interacts with CPSF6, RBMY1A1, RBMX, RNPS1 and phosphorylated SFRS13A. Interacts with SAFB/SAFB1. Interacts with ILDR1 (via C-terminus) and ILDR2. In terms of processing, phosphorylated in the RS domains.

The protein localises to the nucleus. Its function is as follows. Sequence-specific RNA-binding protein which participates in the control of pre-mRNA splicing. Can either activate or suppress exon inclusion. Acts additively with RBMX to promote exon 7 inclusion of the survival motor neuron SMN2. Activates the splicing of MAPT/Tau exon 10. Alters pre-mRNA splicing patterns by antagonizing the effects of splicing regulators, like RBMX. Binds to the AG-rich SE2 domain in the SMN exon 7 RNA. Binds to pre-mRNA. In Bos taurus (Bovine), this protein is Transformer-2 protein homolog beta (TRA2B).